The following is a 360-amino-acid chain: Photosystem II protein D1 (360 aa).

A run of 3 helical transmembrane segments spans residues 30–47 (YVGW…AATT), 119–134 (HFLI…QWEL), and 143–157 (WICV…AAFA). Chlorophyll a is bound at residue His119. Residue Tyr127 coordinates pheophytin a. Asp171 and Glu190 together coordinate [CaMn4O5] cluster. Residues 198–219 (FHMAGVAGMFGGALFSAMHGSL) form a helical membrane-spanning segment. Residue His199 coordinates chlorophyll a. A quinone is bound by residues His216 and 265–266 (SF). His216 lines the Fe cation pocket. Residue His273 participates in Fe cation binding. The chain crosses the membrane as a helical span at residues 275–289 (FLASWPVICVWLTSM). 4 residues coordinate [CaMn4O5] cluster: His333, Glu334, Asp343, and Ala345. The propeptide occupies 346–360 (AAESTSVALVAPAIG).

Belongs to the reaction center PufL/M/PsbA/D family. PSII is composed of 1 copy each of membrane proteins PsbA, PsbB, PsbC, PsbD, PsbE, PsbF, PsbH, PsbI, PsbJ, PsbK, PsbL, PsbM, PsbT, PsbX, PsbY, Psb30/Ycf12, peripheral proteins PsbO, CyanoQ (PsbQ), PsbU, PsbV and a large number of cofactors. It forms dimeric complexes. The D1/D2 heterodimer binds P680, chlorophylls that are the primary electron donor of PSII, and subsequent electron acceptors. It shares a non-heme iron and each subunit binds pheophytin, quinone, additional chlorophylls, carotenoids and lipids. D1 provides most of the ligands for the Mn4-Ca-O5 cluster of the oxygen-evolving complex (OEC). There is also a Cl(-1) ion associated with D1 and D2, which is required for oxygen evolution. The PSII complex binds additional chlorophylls, carotenoids and specific lipids. serves as cofactor. In terms of processing, tyr-162 forms a radical intermediate that is referred to as redox-active TyrZ, YZ or Y-Z. Post-translationally, C-terminally processed by CtpA; processing is essential to allow assembly of the oxygen-evolving complex and thus photosynthetic growth.

It is found in the cellular thylakoid membrane. The enzyme catalyses 2 a plastoquinone + 4 hnu + 2 H2O = 2 a plastoquinol + O2. In terms of biological role, photosystem II (PSII) is a light-driven water:plastoquinone oxidoreductase that uses light energy to abstract electrons from H(2)O, generating O(2) and a proton gradient subsequently used for ATP formation. It consists of a core antenna complex that captures photons, and an electron transfer chain that converts photonic excitation into a charge separation. The D1/D2 (PsbA/PsbD) reaction center heterodimer binds P680, the primary electron donor of PSII as well as several subsequent electron acceptors. The polypeptide is Photosystem II protein D1 (Prochlorococcus marinus (strain NATL1A)).